Reading from the N-terminus, the 714-residue chain is FERM domain-containing protein 7 (714 aa).

The FERM domain occupies L2 to E282. Residues N537–S558 adopt a coiled-coil conformation.

Expressed in liver, kidney, pancreas and at low levels in brain and heart. Expressed in embryonic brain and developing neural retina.

It localises to the cell projection. It is found in the neuron projection. Its subcellular location is the growth cone. Plays a role in neurite development, may be through the activation of the GTPase RAC1. Plays a role in the control of eye movement and gaze stability. The protein is FERM domain-containing protein 7 (FRMD7) of Homo sapiens (Human).